A 96-amino-acid chain; its full sequence is Protein ORF5 (96 aa).

Belongs to the microviridae C protein family.

Functionally, plays a central role in the packaging of viral DNA into phage procapsid, which occurs in the late stage of infection. Can interact with the replicative complex after the completion of one round of DNA synthesis. When protein ORF5 is bound to the replicative form, the complex becomes accessible to procapsid and serves as a DNA packaging apparatus. In Chlamydia phage 1 (Bacteriophage Chp1), this protein is Protein ORF5.